A 345-amino-acid chain; its full sequence is S-adenosylmethionine:tRNA ribosyltransferase-isomerase (345 aa).

The protein belongs to the QueA family. Monomer.

Its subcellular location is the cytoplasm. It catalyses the reaction 7-aminomethyl-7-carbaguanosine(34) in tRNA + S-adenosyl-L-methionine = epoxyqueuosine(34) in tRNA + adenine + L-methionine + 2 H(+). Its pathway is tRNA modification; tRNA-queuosine biosynthesis. Transfers and isomerizes the ribose moiety from AdoMet to the 7-aminomethyl group of 7-deazaguanine (preQ1-tRNA) to give epoxyqueuosine (oQ-tRNA). The polypeptide is S-adenosylmethionine:tRNA ribosyltransferase-isomerase (Shewanella sp. (strain W3-18-1)).